Here is a 248-residue protein sequence, read N- to C-terminus: Mannose-binding protein C (248 aa).

Residues 1-20 form the signal peptide; the sequence is MSLIPSLSLLLMSMVAASYS. One can recognise a Collagen-like domain in the interval 42 to 99; that stretch reads GINGFPGKDGRDGTKGEKGEPGQGLRGLQGPPGKLGPPGNPGPSGSPGPKGQKGDPGK. A disordered region spans residues 43 to 107; that stretch reads INGFPGKDGR…GKSPDCDSSL (65 aa). P47 carries the 4-hydroxyproline modification. Residues 49-61 are compositionally biased toward basic and acidic residues; that stretch reads KDGRDGTKGEKGE. A 4-hydroxyproline mark is found at P73, P79, P82, and P88. Over residues 75 to 87 the composition is skewed to pro residues; sequence KLGPPGNPGPSGS. The span at 93 to 102 shows a compositional bias: basic and acidic residues; it reads QKGDPGKSPD. Residues 112–130 are a coiled coil; that stretch reads RKALQTEMARIKKWLTFSL. A C-type lectin domain is found at 134-245; that stretch reads VGNKFFLTNG…CSSSHLAVCE (112 aa). 2 cysteine pairs are disulfide-bonded: C155–C244 and C222–C236.

As to quaternary structure, oligomeric complex of 3 or more homotrimers. Interacts with MASP1 and MASP2. Interacts with MEP1A and MEP1B and may inhibit their catalytic activity. In terms of processing, hydroxylation on proline residues within the sequence motif, GXPG, is most likely to be 4-hydroxy as this fits the requirement for 4-hydroxylation in vertebrates.

The protein resides in the secreted. Functionally, calcium-dependent lectin involved in innate immune defense. Binds mannose, fucose and N-acetylglucosamine on different microorganisms and activates the lectin complement pathway. Binds to late apoptotic cells, as well as to apoptotic blebs and to necrotic cells, but not to early apoptotic cells, facilitating their uptake by macrophages. The polypeptide is Mannose-binding protein C (MBL2) (Hylobates lar (Lar gibbon)).